The sequence spans 368 residues: Flagellar P-ring protein (368 aa).

Residues 1 to 24 (MDKPMKRIFVVLVILLVLPQLALA) form the signal peptide.

This sequence belongs to the FlgI family. The basal body constitutes a major portion of the flagellar organelle and consists of four rings (L,P,S, and M) mounted on a central rod.

The protein resides in the periplasm. Its subcellular location is the bacterial flagellum basal body. Functionally, assembles around the rod to form the L-ring and probably protects the motor/basal body from shearing forces during rotation. This is Flagellar P-ring protein from Geobacter sulfurreducens (strain ATCC 51573 / DSM 12127 / PCA).